The primary structure comprises 204 residues: Urease accessory protein UreG 1 (204 aa).

Residue 14–21 (GPVGSGKT) participates in GTP binding.

It belongs to the SIMIBI class G3E GTPase family. UreG subfamily. As to quaternary structure, homodimer. UreD, UreF and UreG form a complex that acts as a GTP-hydrolysis-dependent molecular chaperone, activating the urease apoprotein by helping to assemble the nickel containing metallocenter of UreC. The UreE protein probably delivers the nickel.

The protein resides in the cytoplasm. Functionally, facilitates the functional incorporation of the urease nickel metallocenter. This process requires GTP hydrolysis, probably effectuated by UreG. In Methylorubrum extorquens (strain PA1) (Methylobacterium extorquens), this protein is Urease accessory protein UreG 1.